A 339-amino-acid polypeptide reads, in one-letter code: UDP-N-acetylglucosamine--N-acetylmuramyl-(pentapeptide) pyrophosphoryl-undecaprenol N-acetylglucosamine transferase (339 aa).

Residues 10–12 (TGG), asparagine 124, arginine 168, serine 188, isoleucine 235, and glutamine 280 each bind UDP-N-acetyl-alpha-D-glucosamine.

This sequence belongs to the glycosyltransferase 28 family. MurG subfamily.

The protein localises to the cell inner membrane. It catalyses the reaction di-trans,octa-cis-undecaprenyl diphospho-N-acetyl-alpha-D-muramoyl-L-alanyl-D-glutamyl-meso-2,6-diaminopimeloyl-D-alanyl-D-alanine + UDP-N-acetyl-alpha-D-glucosamine = di-trans,octa-cis-undecaprenyl diphospho-[N-acetyl-alpha-D-glucosaminyl-(1-&gt;4)]-N-acetyl-alpha-D-muramoyl-L-alanyl-D-glutamyl-meso-2,6-diaminopimeloyl-D-alanyl-D-alanine + UDP + H(+). Its pathway is cell wall biogenesis; peptidoglycan biosynthesis. In terms of biological role, cell wall formation. Catalyzes the transfer of a GlcNAc subunit on undecaprenyl-pyrophosphoryl-MurNAc-pentapeptide (lipid intermediate I) to form undecaprenyl-pyrophosphoryl-MurNAc-(pentapeptide)GlcNAc (lipid intermediate II). In Pseudothermotoga lettingae (strain ATCC BAA-301 / DSM 14385 / NBRC 107922 / TMO) (Thermotoga lettingae), this protein is UDP-N-acetylglucosamine--N-acetylmuramyl-(pentapeptide) pyrophosphoryl-undecaprenol N-acetylglucosamine transferase.